The following is a 230-amino-acid chain: uncharacterized protein (230 aa).

A signal peptide spans Met1–Arg16. The next 4 helical transmembrane spans lie at Val27–Ile47, Leu118–Phe138, Phe150–Leu170, and Ser172–Phe191.

The protein resides in the cytoplasm. It is found in the nucleus membrane. This is an uncharacterized protein from Schizosaccharomyces pombe (strain 972 / ATCC 24843) (Fission yeast).